Here is a 335-residue protein sequence, read N- to C-terminus: Anthranilate phosphoribosyltransferase (335 aa).

Residues Gly-82, 85 to 86, Thr-90, 92 to 95, 110 to 118, and Ser-122 each bind 5-phospho-alpha-D-ribose 1-diphosphate; these read GD, NIST, and KHGGRSVSS. Gly-82 contacts anthranilate. Ser-94 is a Mg(2+) binding site. Residue Arg-168 coordinates anthranilate. Mg(2+)-binding residues include Asp-226 and Glu-227.

It belongs to the anthranilate phosphoribosyltransferase family. As to quaternary structure, homodimer. The cofactor is Mg(2+).

It carries out the reaction N-(5-phospho-beta-D-ribosyl)anthranilate + diphosphate = 5-phospho-alpha-D-ribose 1-diphosphate + anthranilate. Its pathway is amino-acid biosynthesis; L-tryptophan biosynthesis; L-tryptophan from chorismate: step 2/5. Functionally, catalyzes the transfer of the phosphoribosyl group of 5-phosphorylribose-1-pyrophosphate (PRPP) to anthranilate to yield N-(5'-phosphoribosyl)-anthranilate (PRA). In Francisella philomiragia subsp. philomiragia (strain ATCC 25017 / CCUG 19701 / FSC 153 / O#319-036), this protein is Anthranilate phosphoribosyltransferase.